Here is a 155-residue protein sequence, read N- to C-terminus: Pathogenesis-related protein A (155 aa).

The protein belongs to the BetVI family.

The polypeptide is Pathogenesis-related protein A (PCPR1-1) (Petroselinum crispum (Parsley)).